A 179-amino-acid chain; its full sequence is Large ribosomal subunit protein uL5 (179 aa).

This sequence belongs to the universal ribosomal protein uL5 family. Part of the 50S ribosomal subunit; part of the 5S rRNA/L5/L18/L25 subcomplex. Contacts the 5S rRNA and the P site tRNA. Forms a bridge to the 30S subunit in the 70S ribosome.

This is one of the proteins that bind and probably mediate the attachment of the 5S RNA into the large ribosomal subunit, where it forms part of the central protuberance. In the 70S ribosome it contacts protein S13 of the 30S subunit (bridge B1b), connecting the 2 subunits; this bridge is implicated in subunit movement. Contacts the P site tRNA; the 5S rRNA and some of its associated proteins might help stabilize positioning of ribosome-bound tRNAs. This is Large ribosomal subunit protein uL5 from Prochlorococcus marinus (strain MIT 9312).